The chain runs to 459 residues: Acetyltransferase pigO (459 aa).

It belongs to the trichothecene O-acetyltransferase family.

It participates in secondary metabolite biosynthesis. Its function is as follows. Acetyltransferase; part of the gene cluster that mediates the biosynthesis of azaphilone pigments (MonAzPs), a complex mixture of compounds with a common azaphilone skeleton very widely used as food colorants. PigM and pigO are involved in the elimination of the omega-1 alcohol with pigM acting as an O-acetyltransferase that synthesizes the O-11 acetyl intermediate whereas pigO eliminates acetic acid to yield an intermediate with a C10(11) double bond. The first step of the pathway is performed by the nrPKS pigA that forms the hexaketide precursor from successive condensations of five malonyl-CoA units, with a simple acetyl-CoA starter unit. The role of esterase pigG is not clear, but it may play at most a supplementary role in the formation of the benzaldehyde produced by the pigA nrPKS. This very reactive benzaldehyde is intercepted by the pigC ketoreductase that to provide the first stable enzyme-free MonAzPs intermediate, 6-(4-hydroxy-2-oxopentyl)-3-methyl-2,4-dioxocyclohexane carbaldehyde, also known as M7PKS-1. The FAD-dependent monooxygenase pigN hydroxylates M7PKS-1 at C-4, which triggers the formation of the pyran ring. PigJ, pigK and pigD are involved in the acetylation of the pyran ring. PigJ and pigK form the two subunits of a dedicated fungal FAS that produces the side chain fatty acyl moiety of MonAzPs and pigD transfers the fatty acyl chain to the C-4 alcohol. PigM and pigO are involved in the elimination of the omega-1 alcohol. PigM acts as an O-acetyltransferase that synthesizes the putative O-11 acetyl intermediate whereas pigO eliminates acetic acid to yield an intermediate with a C10(11) double bond. The dehydration of the C-11 alcohol followed by the reduction of the C6(7) double bond by the NAD(P)H-dependent oxidoreductase pigE increases the electrophilicity of the C-5 ketone of the resulting acyl benzopyran. This in turn sets up the C-5 ketone for an intramolecular Knoevenagel aldol condensation with the C-20 enol of the side chain. This condensation affords the characteristic linear tricyclic carbon skeletons of the yellow pigments that serve as the common precursors for the classical yellow pigments monascin and ankaflavin, orange pigments rubopunctatin and monascorubrin, and red pigments ribropunctamine and monascorubramine. The FAD-dependent oxidoreductase pigF is especially invoved in the biosynthesis of orange and red pigments via desaturation of C6(7). The protein is Acetyltransferase pigO of Monascus ruber (Mold).